Here is a 485-residue protein sequence, read N- to C-terminus: Aspartyl/glutamyl-tRNA(Asn/Gln) amidotransferase subunit B (485 aa).

It belongs to the GatB/GatE family. GatB subfamily. As to quaternary structure, heterotrimer of A, B and C subunits.

It carries out the reaction L-glutamyl-tRNA(Gln) + L-glutamine + ATP + H2O = L-glutaminyl-tRNA(Gln) + L-glutamate + ADP + phosphate + H(+). The catalysed reaction is L-aspartyl-tRNA(Asn) + L-glutamine + ATP + H2O = L-asparaginyl-tRNA(Asn) + L-glutamate + ADP + phosphate + 2 H(+). In terms of biological role, allows the formation of correctly charged Asn-tRNA(Asn) or Gln-tRNA(Gln) through the transamidation of misacylated Asp-tRNA(Asn) or Glu-tRNA(Gln) in organisms which lack either or both of asparaginyl-tRNA or glutaminyl-tRNA synthetases. The reaction takes place in the presence of glutamine and ATP through an activated phospho-Asp-tRNA(Asn) or phospho-Glu-tRNA(Gln). The sequence is that of Aspartyl/glutamyl-tRNA(Asn/Gln) amidotransferase subunit B from Paramagnetospirillum magneticum (strain ATCC 700264 / AMB-1) (Magnetospirillum magneticum).